The sequence spans 383 residues: MARLTLDDVTKVYTDEGGGDIVAVEEISLDIDDGEFLVLVGPSGCGKSTTLRMMAGLETVTEGELRLEDRVLNGVSAQDRDIAMVFQSYALYPHKSVRGNMSFGLEESTGLPDDEIRQRVEETTDMLGISDLLDRKPGQLSGGQQQRVALGRAIVRDPEVFLMDEPLSNLDAKLRAEMRTELQRLQGELGVTTVYVTHDQTEAMTMGDRVAVLDDGELQQVGTPLDCYHRPNNLFVAGFIGEPSMNLFDGSLSGDTFRGDGFDYPLSGATRDQLGGASGLTLGIRPEDVTVGERRSGQRTFDAEVVVVEPQGNENAVHLRFVDGDEGTQFTATTTGQSRVEAGDRTTVSFPEDAIHLFDGETGDALKNRELPSNRAIDAFVSN.

An ABC transporter domain is found at 4–240 (LTLDDVTKVY…PNNLFVAGFI (237 aa)). 41-48 (GPSGCGKS) lines the ATP pocket.

The protein belongs to the ABC transporter superfamily. Carbohydrate uptake transporter-1 (CUT1) (TC 3.A.1.1) family. The complex is composed of two ATP-binding proteins (XacJ and XacK), two transmembrane proteins (XacH and XacI) and a solute-binding protein (XacG).

It localises to the cell membrane. The catalysed reaction is D-xylose(out) + ATP + H2O = D-xylose(in) + ADP + phosphate + H(+). It catalyses the reaction L-arabinose(out) + ATP + H2O = L-arabinose(in) + ADP + phosphate + H(+). Part of the ABC transporter complex XacGHIJK involved in the uptake of xylose and arabinose. Responsible for energy coupling to the transport system. The protein is Xylose/arabinose import ATP-binding protein XacK of Haloferax volcanii (strain ATCC 29605 / DSM 3757 / JCM 8879 / NBRC 14742 / NCIMB 2012 / VKM B-1768 / DS2) (Halobacterium volcanii).